The chain runs to 306 residues: Curved DNA-binding protein (306 aa).

Residues 5 to 69 enclose the J domain; sequence DYYAIMGVKP…QRRAEYDQMW (65 aa).

The protein resides in the cytoplasm. It localises to the nucleoid. Its function is as follows. DNA-binding protein that preferentially recognizes a curved DNA sequence. It is probably a functional analog of DnaJ; displays overlapping activities with DnaJ, but functions under different conditions, probably acting as a molecular chaperone in an adaptive response to environmental stresses other than heat shock. Lacks autonomous chaperone activity; binds native substrates and targets them for recognition by DnaK. Its activity is inhibited by the binding of CbpM. In Escherichia coli O17:K52:H18 (strain UMN026 / ExPEC), this protein is Curved DNA-binding protein.